Here is a 647-residue protein sequence, read N- to C-terminus: MLWCPSVLVPLIAVAACLPVLAIGTPLEWEFAITLKSKILFVDEFWRTLASAAHEFDELSALTFDETEELIYFNDQQHRNGSIFSLRRDALMASHIAEQAIQRTGNESVGGLAYDPLNRNLFWSDTLQKKIFFASIDSKVTETPKVLVDLSQEGARPDGVAVDVCRRKLYWTNSNITHPTVESIDLAGTNRQVIIDTDIDMPRGIVVDQLSDRIFWIDDLKGVFFALKSARLDGSDRQLVLHDKHHEPLNLAVTNDAIYWTDKTTKAVWSHPKVPIVKATTTTSPVKAEEEDATETIPDIEPEPVAEVSALLRVANLSEEARGIVARTGFYQRLQKDEHCANIVRKVKERLDLMTKKKQMRSLVDEKTAQLERDHCLNGGTYIADRVLCICPTGFKGSRCEIRECHNFCVHGTCEISDRAYPKCYCQPGFSGERCEISKCSGLCLNGGHCKLEDISEKPSCECPHNFAGERCEQNSTEICALFCRLLKHEADIYVPFGCHDICEELAKDASDKIAIPQYHHLEVCMTPSPWTSNVIIVLVLGIVSCFFLVAVIVHGFRRLYKPKRPRIRKTFVVRKQARTNSSGDTPLTNRPLATEQCEITIENCCNMNICETPCFDPKLVEQTLAKSSNCKEDKKILIHNMDDDLY.

The N-terminal stretch at 1-22 (MLWCPSVLVPLIAVAACLPVLA) is a signal peptide. Over 23 to 534 (IGTPLEWEFA…CMTPSPWTSN (512 aa)) the chain is Extracellular. N-linked (GlcNAc...) asparagine glycosylation is found at asparagine 80 and asparagine 106. LDL-receptor class B repeat units follow at residues 119 to 166 (RNLF…DVCR), 167 to 211 (RKLY…DQLS), and 212 to 257 (DRIF…TNDA). Asparagine 175 is a glycosylation site (N-linked (GlcNAc...) asparagine). Asparagine 316 carries an N-linked (GlcNAc...) asparagine glycan. EGF-like domains follow at residues 365–401 (DEKT…SRCE) and 436–473 (EISK…ERCE). Disulfide bonds link cysteine 376/cysteine 389, cysteine 391/cysteine 400, cysteine 440/cysteine 450, cysteine 444/cysteine 461, and cysteine 463/cysteine 472. N-linked (GlcNAc...) asparagine glycosylation occurs at asparagine 475. A helical transmembrane segment spans residues 535–555 (VIIVLVLGIVSCFFLVAVIVH). At 556–647 (GFRRLYKPKR…LIHNMDDDLY (92 aa)) the chain is on the cytoplasmic side.

The protein belongs to the cueball family.

It is found in the cell membrane. Its function is as follows. Has a role in spermatogenesis and oogenesis. In Drosophila persimilis (Fruit fly), this protein is Protein cueball.